The sequence spans 438 residues: Adenylosuccinate synthetase (438 aa).

Residues G13 to K19 and G41 to T43 each bind GTP. D14 serves as the catalytic Proton acceptor. Mg(2+) is bound by residues D14 and G41. IMP is bound by residues D14–K17, N39–H42, T130, R144, Q225, T240, and R310. Residue H42 is the Proton donor of the active site. Residue A306–R312 participates in substrate binding. Residues R312, K338–D340, and S421–G423 contribute to the GTP site.

The protein belongs to the adenylosuccinate synthetase family. In terms of assembly, homodimer. It depends on Mg(2+) as a cofactor.

Its subcellular location is the cytoplasm. It carries out the reaction IMP + L-aspartate + GTP = N(6)-(1,2-dicarboxyethyl)-AMP + GDP + phosphate + 2 H(+). The protein operates within purine metabolism; AMP biosynthesis via de novo pathway; AMP from IMP: step 1/2. Its function is as follows. Plays an important role in the de novo pathway of purine nucleotide biosynthesis. Catalyzes the first committed step in the biosynthesis of AMP from IMP. The protein is Adenylosuccinate synthetase of Vibrio vulnificus (strain YJ016).